We begin with the raw amino-acid sequence, 104 residues long: L-rhamnose mutarotase (104 aa).

Y18 is a binding site for substrate. The active-site Proton donor is the H22. Substrate contacts are provided by residues Y41 and 76–77 (WW).

The protein belongs to the rhamnose mutarotase family. Homodimer.

Its subcellular location is the cytoplasm. It carries out the reaction alpha-L-rhamnose = beta-L-rhamnose. It participates in carbohydrate metabolism; L-rhamnose metabolism. Functionally, involved in the anomeric conversion of L-rhamnose. This Rhizobium meliloti (strain 1021) (Ensifer meliloti) protein is L-rhamnose mutarotase.